The primary structure comprises 347 residues: NADH-ubiquinone oxidoreductase chain 2 (347 aa).

Transmembrane regions (helical) follow at residues Met-1 to Leu-21, His-25 to Met-45, Met-68 to Ile-88, Met-96 to Pro-116, Val-122 to Leu-142, Ile-145 to Gly-165, Ile-178 to Pro-198, Ser-201 to Ile-221, Ile-239 to Gly-259, Ser-274 to Met-294, and Met-326 to Leu-346.

It belongs to the complex I subunit 2 family. As to quaternary structure, core subunit of respiratory chain NADH dehydrogenase (Complex I) which is composed of 45 different subunits. Interacts with TMEM242.

The protein localises to the mitochondrion inner membrane. The catalysed reaction is a ubiquinone + NADH + 5 H(+)(in) = a ubiquinol + NAD(+) + 4 H(+)(out). Core subunit of the mitochondrial membrane respiratory chain NADH dehydrogenase (Complex I) which catalyzes electron transfer from NADH through the respiratory chain, using ubiquinone as an electron acceptor. Essential for the catalytic activity and assembly of complex I. The sequence is that of NADH-ubiquinone oxidoreductase chain 2 from Sylvisorex lunaris (Moon forest shrew).